We begin with the raw amino-acid sequence, 313 residues long: tRNA dimethylallyltransferase (313 aa).

11 to 18 (GPTACGKT) lines the ATP pocket. 13–18 (TACGKT) serves as a coordination point for substrate. 3 interaction with substrate tRNA regions span residues 36–39 (DSAL), 160–164 (QRIER), and 243–248 (RCVGYR).

It belongs to the IPP transferase family. Monomer. Mg(2+) is required as a cofactor.

The catalysed reaction is adenosine(37) in tRNA + dimethylallyl diphosphate = N(6)-dimethylallyladenosine(37) in tRNA + diphosphate. In terms of biological role, catalyzes the transfer of a dimethylallyl group onto the adenine at position 37 in tRNAs that read codons beginning with uridine, leading to the formation of N6-(dimethylallyl)adenosine (i(6)A). The chain is tRNA dimethylallyltransferase from Neisseria meningitidis serogroup C (strain 053442).